We begin with the raw amino-acid sequence, 589 residues long: Heterogeneous nuclear ribonucleoprotein L (589 aa).

Residues 1-16 show a composition bias toward basic residues; the sequence is MSRRLLPRAEKRRRRL. A disordered region spans residues 1 to 100; the sequence is MSRRLLPRAE…NYDDPHKTPA (100 aa). Residues 17–27 show a composition bias toward basic and acidic residues; sequence EQRQQPDEQRR. Residues 38 to 54 show a composition bias toward gly residues; sequence AGGGGGGGRYYGGGSEG. Ser52 carries the phosphoserine modification. Residues Lys59 and Lys62 each participate in a glycyl lysine isopeptide (Lys-Gly) (interchain with G-Cter in SUMO2) cross-link. Over residues 69–90 the composition is skewed to gly residues; sequence QHGGGGGGGGGAGAAGGGGGGE. Ser101 is subject to Phosphoserine. One can recognise an RRM 1 domain in the interval 102 to 176; that stretch reads PVVHIRGLID…HPAFVNYSTS (75 aa). Residue Lys136 forms a Glycyl lysine isopeptide (Lys-Gly) (interchain with G-Cter in SUMO2) linkage. Ser185 carries the phosphoserine modification. The 78-residue stretch at 193–270 folds into the RRM 2 domain; the sequence is SVLLFTILNP…CTLKIEYAKP (78 aa). Lys269 is modified (N6-acetyllysine). Positions 284-301 are enriched in polar residues; that stretch reads DYTNPNLSGQGDPGSNPN. Residues 284–378 are disordered; that stretch reads DYTNPNLSGQ…PPPPPEYGPH (95 aa). Phosphoserine occurs at positions 291 and 298. A Glycyl lysine isopeptide (Lys-Gly) (interchain with G-Cter in SUMO2) cross-link involves residue Lys302. An asymmetric dimethylarginine mark is found at Arg354 and Arg358. A compositionally biased stretch (pro residues) spans 364–375; it reads GHPPPPPPPPEY. Ser381 is modified (phosphoserine). 2 RRM domains span residues 382-478 and 495-583; these read PVLM…KDFS and RIQH…LCFS. Ser544 is modified (phosphoserine; by CaMK4). Lys568 is covalently cross-linked (Glycyl lysine isopeptide (Lys-Gly) (interchain with G-Cter in SUMO2)).

In terms of assembly, identified in a IGF2BP1-dependent mRNP granule complex containing untranslated mRNAs. Interacts with HNRNPLL. Interacts with APEX1; the interaction is DNA-dependent. Component of a complex with SETD2. Interacts with ELAVL1. Part of a transcription inhibitory ribonucleoprotein complex composed at least of the circular RNA circZNF827, ZNF827 and HNRNPK. Interacts with CHD8 in an RNA-dependent manner. Several isoelectric forms of the L protein are probably the results of post-translational modifications. In terms of processing, phosphorylation at Ser-544 by CaMK4 enhances interaction with a CaMK4-responsive RNA element (CaRRE1), and prevents inclusion of the stress axis-regulated exon (STREX) of the KCNMA1 potassium channel transcripts upon membrane depolarization.

It localises to the nucleus. Its subcellular location is the nucleoplasm. The protein resides in the cytoplasm. Functionally, splicing factor binding to exonic or intronic sites and acting as either an activator or repressor of exon inclusion. Exhibits a binding preference for CA-rich elements. Component of the heterogeneous nuclear ribonucleoprotein (hnRNP) complexes and associated with most nascent transcripts. Associates, together with APEX1, to the negative calcium responsive element (nCaRE) B2 of the APEX2 promoter. As part of a ribonucleoprotein complex composed at least of ZNF827, HNRNPK and the circular RNA circZNF827 that nucleates the complex on chromatin, may negatively regulate the transcription of genes involved in neuronal differentiation. Regulates alternative splicing of a core group of genes involved in neuronal differentiation, likely by mediating H3K36me3-coupled transcription elongation and co-transcriptional RNA processing via interaction with CHD8. This is Heterogeneous nuclear ribonucleoprotein L (HNRNPL) from Homo sapiens (Human).